Here is a 396-residue protein sequence, read N- to C-terminus: Elongation factor Tu 2 (396 aa).

The 197-residue stretch at 10–206 (KPHVNVGTIG…TLDTYIPEPE (197 aa)) folds into the tr-type G domain. The segment at 19–26 (GHVDHGKT) is G1. 19–26 (GHVDHGKT) contributes to the GTP binding site. Mg(2+) is bound at residue threonine 26. The tract at residues 60 to 64 (GITIN) is G2. The segment at 81–84 (DCPG) is G3. GTP is bound by residues 81-85 (DCPGH) and 136-139 (NKCD). The segment at 136–139 (NKCD) is G4. The tract at residues 174-176 (SAL) is G5.

It belongs to the TRAFAC class translation factor GTPase superfamily. Classic translation factor GTPase family. EF-Tu/EF-1A subfamily. Monomer.

The protein localises to the cytoplasm. The catalysed reaction is GTP + H2O = GDP + phosphate + H(+). In terms of biological role, GTP hydrolase that promotes the GTP-dependent binding of aminoacyl-tRNA to the A-site of ribosomes during protein biosynthesis. The protein is Elongation factor Tu 2 of Psychrobacter sp. (strain PRwf-1).